The chain runs to 534 residues: Steroid hormone receptor family member cnr14 (534 aa).

Disordered regions lie at residues 30-53 (SGKT…QWSH) and 119-139 (PATS…GHTT). The segment covering 119–130 (PATSVTSSLSPP) has biased composition (low complexity). The nuclear receptor DNA-binding region spans 148-223 (ISFCKVCGDK…SGMSKDSVRQ (76 aa)). 2 NR C4-type zinc fingers span residues 151–171 (CKVC…CEGC) and 187–211 (CLKQ…FKKC). The NR LBD domain occupies 252-493 (EVDAVYEAVL…PPLVVEMFQL (242 aa)). Residues 502–534 (HNNQENQYTPAPEHQSPQPQQPTPNQQQTPVHC) are disordered. Over residues 511-534 (PAPEHQSPQPQQPTPNQQQTPVHC) the composition is skewed to low complexity.

Belongs to the nuclear hormone receptor family. NR1 subfamily. In terms of tissue distribution, most abundant in embryos.

It is found in the nucleus. In terms of biological role, transcriptional regulator which is involved in the sex determination and X chromosome dosage compensation pathways. Directly binds to five 5'-A(G/C)(G/T)(T/G)C(A/G)-3' sites in the promoter of sex-determining factor xol-1 to negatively regulate its expression and promote hermaphrodite development. Together with fox-1 is involved in making the distinction between one and two X-chromosomes. Plays a role in the fox-1-mediated repression of the functionally active isoform (isoform b) of the sex-determining factor xol-1 gene to promote hermaphrodite development. Plays a role in the association of the dosage compensation complex proteins dpy-27 and sdc-3 with the hermaphrodite X chromosomes. This is Steroid hormone receptor family member cnr14 from Caenorhabditis elegans.